The following is a 367-amino-acid chain: Aminomethyltransferase (367 aa).

It belongs to the GcvT family. The glycine cleavage system is composed of four proteins: P, T, L and H.

The enzyme catalyses N(6)-[(R)-S(8)-aminomethyldihydrolipoyl]-L-lysyl-[protein] + (6S)-5,6,7,8-tetrahydrofolate = N(6)-[(R)-dihydrolipoyl]-L-lysyl-[protein] + (6R)-5,10-methylene-5,6,7,8-tetrahydrofolate + NH4(+). In terms of biological role, the glycine cleavage system catalyzes the degradation of glycine. The sequence is that of Aminomethyltransferase from Lysinibacillus sphaericus (strain C3-41).